Consider the following 402-residue polypeptide: WAT1-related protein At5g07050 (402 aa).

The next 10 helical transmembrane spans lie at 20–40 (FAMI…KISL), 48–68 (VLVV…AFFF), 74–94 (PKIT…GPVI), 109–129 (TFSC…AVLF), 149–169 (VVTV…VELF), 196–216 (FLKG…LFVL), 229–249 (LSLT…VTFV), 266–286 (LAAA…QGIV), 293–313 (VFAT…GSFV), and 318–338 (IFLG…AVLW). EamA domains lie at 29–159 (YAGM…MLMT) and 208–337 (LAWA…YAVL).

The protein belongs to the drug/metabolite transporter (DMT) superfamily. Plant drug/metabolite exporter (P-DME) (TC 2.A.7.4) family.

It is found in the membrane. The chain is WAT1-related protein At5g07050 from Arabidopsis thaliana (Mouse-ear cress).